A 140-amino-acid chain; its full sequence is Nucleoside diphosphate kinase (140 aa).

ATP-binding residues include Lys11, Phe59, Arg87, Thr93, Arg104, and Asn114. His117 serves as the catalytic Pros-phosphohistidine intermediate.

The protein belongs to the NDK family. As to quaternary structure, homotetramer. The cofactor is Mg(2+).

The protein localises to the cytoplasm. The enzyme catalyses a 2'-deoxyribonucleoside 5'-diphosphate + ATP = a 2'-deoxyribonucleoside 5'-triphosphate + ADP. It carries out the reaction a ribonucleoside 5'-diphosphate + ATP = a ribonucleoside 5'-triphosphate + ADP. In terms of biological role, major role in the synthesis of nucleoside triphosphates other than ATP. The ATP gamma phosphate is transferred to the NDP beta phosphate via a ping-pong mechanism, using a phosphorylated active-site intermediate. This chain is Nucleoside diphosphate kinase, found in Sinorhizobium fredii (strain NBRC 101917 / NGR234).